Reading from the N-terminus, the 211-residue chain is Uracil phosphoribosyltransferase (211 aa).

30 to 34 (KGLVR) provides a ligand contact to GTP. Residues arginine 79, arginine 104, and 133–141 (DPMLATGIT) contribute to the 5-phospho-alpha-D-ribose 1-diphosphate site. Residues isoleucine 197 and 202–204 (GDA) contribute to the uracil site. Aspartate 203 is a binding site for 5-phospho-alpha-D-ribose 1-diphosphate.

The protein belongs to the UPRTase family. The cofactor is Mg(2+).

It catalyses the reaction UMP + diphosphate = 5-phospho-alpha-D-ribose 1-diphosphate + uracil. It participates in pyrimidine metabolism; UMP biosynthesis via salvage pathway; UMP from uracil: step 1/1. With respect to regulation, allosterically activated by GTP. Catalyzes the conversion of uracil and 5-phospho-alpha-D-ribose 1-diphosphate (PRPP) to UMP and diphosphate. This Pyrobaculum islandicum (strain DSM 4184 / JCM 9189 / GEO3) protein is Uracil phosphoribosyltransferase.